The chain runs to 214 residues: Adenylate kinase (214 aa).

10–15 lines the ATP pocket; it reads GAGKGT. The tract at residues 30–59 is NMP; that stretch reads STGDMLRAAVKAGTPLGLEAKKVMDAGQLV. Residues threonine 31, arginine 36, 57-59, 85-88, and glutamine 92 each bind AMP; these read QLV and GFPR. Positions 122–159 are LID; it reads GRRVHPGSGRVYHIVFNQPKVEGKDDVTGEDLAIRPDD. ATP contacts are provided by residues arginine 123 and 132 to 133; that span reads VY. The AMP site is built by arginine 156 and arginine 167. Glutamine 200 lines the ATP pocket.

It belongs to the adenylate kinase family. As to quaternary structure, monomer.

Its subcellular location is the cytoplasm. The catalysed reaction is AMP + ATP = 2 ADP. The protein operates within purine metabolism; AMP biosynthesis via salvage pathway; AMP from ADP: step 1/1. Catalyzes the reversible transfer of the terminal phosphate group between ATP and AMP. Plays an important role in cellular energy homeostasis and in adenine nucleotide metabolism. In Shewanella piezotolerans (strain WP3 / JCM 13877), this protein is Adenylate kinase.